Consider the following 422-residue polypeptide: MTGYTLTCPVCNKEFSDSYTLTCPGGCQGLIRAKYAARQITLHDAPGVFKYMDWLPVTGVLRTRAEPVCFKSEGLARALGLSDLWIVFSGYWPEVGAFAVSGSFKEFEAFPTMQRLSERTKGIIQVSSAGNTGRAFAEVSAETCQPVIIVVPESARDRLFTTSPAHDTLLITISGDYTDAINLGSRICTLPGIFPEGGAKNVARRDGMGTVMLAGTLAMGTLPDWYLQAVGSGTGGIAAYEASLRLIADGRFGTRMPRLLLFQNEPFIPMVRAWQEKRREIKDEDMPDAEQAISQVYSDVLTNRTPPYGIVGGVFDTLIATNGLMAGVSSADAQEAGKLFSSSEGIDPDPAAAVCVAGLMRAVRSGVIKPDEKILLNITGGGYARGRKDLPRFVKAPDIMVSKETPFEKISAKVQEWMRYYA.

The residue at position 105 (lysine 105) is an N6-(pyridoxal phosphate)lysine. Residues asparagine 131 and threonine 379 each coordinate pyridoxal 5'-phosphate.

It belongs to the threonine synthase family. Cysteate synthase subfamily. As to quaternary structure, homotrimer. It depends on pyridoxal 5'-phosphate as a cofactor.

It carries out the reaction O-phospho-L-serine + sulfite + H(+) = L-cysteate + phosphate. It participates in cofactor biosynthesis; coenzyme M biosynthesis. In terms of biological role, specifically catalyzes the beta-elimination of phosphate from L-phosphoserine and the beta-addition of sulfite to the dehydroalanine intermediate to produce L-cysteate. The protein is Cysteate synthase of Methanospirillum hungatei JF-1 (strain ATCC 27890 / DSM 864 / NBRC 100397 / JF-1).